Consider the following 409-residue polypeptide: Failed axon connections homolog (409 aa).

A helical membrane pass occupies residues 68-88 (YLTGGALLAAAAYLLHELLVI). The interval 372–409 (DEGAENSFSRTPDTDFTGHSLFDSDVDMDDYTDHEQCK) is disordered.

Belongs to the FAX family.

It localises to the membrane. In terms of biological role, may play a role in axonal development. This chain is Failed axon connections homolog (FAXC), found in Homo sapiens (Human).